The sequence spans 239 residues: MRQSGRKSNQLRPISLELSPLINAEGSCLIKIGNTHVMCSASYDTTVPPFLRNQNRGWITAEYSMLPGSTSQRNKREAVQGKQSGRTQEIQRLIGRTMRSIIDLQKLGERQITIDCDVINADGGTRTAAITGSYVALHLAIRSLMKERILKVNPLINQVAAVSCGIYKDQPILDLDYLEDSDAEVDSNFVFAGNGNLIEIQGTAEKKPFSEEQFLEMLKLAKAGVAELFKLQNQVLLNL.

Residues R86 and 124-126 (GTR) each bind phosphate.

The protein belongs to the RNase PH family. Homohexameric ring arranged as a trimer of dimers.

It catalyses the reaction tRNA(n+1) + phosphate = tRNA(n) + a ribonucleoside 5'-diphosphate. In terms of biological role, phosphorolytic 3'-5' exoribonuclease that plays an important role in tRNA 3'-end maturation. Removes nucleotide residues following the 3'-CCA terminus of tRNAs; can also add nucleotides to the ends of RNA molecules by using nucleoside diphosphates as substrates, but this may not be physiologically important. Probably plays a role in initiation of 16S rRNA degradation (leading to ribosome degradation) during starvation. In Rickettsia bellii (strain OSU 85-389), this protein is Ribonuclease PH.